The sequence spans 592 residues: Aspartate--tRNA ligase (592 aa).

Glu173 contributes to the L-aspartate binding site. The interval 197 to 200 is aspartate; sequence QLFK. Arg219 contributes to the L-aspartate binding site. ATP contacts are provided by residues 219–221 and Gln228; that span reads RDE. His449 is a binding site for L-aspartate. Residue Glu483 coordinates ATP. Position 490 (Arg490) interacts with L-aspartate. 535 to 538 is a binding site for ATP; that stretch reads GLDR.

This sequence belongs to the class-II aminoacyl-tRNA synthetase family. Type 1 subfamily. Homodimer.

The protein resides in the cytoplasm. It carries out the reaction tRNA(Asp) + L-aspartate + ATP = L-aspartyl-tRNA(Asp) + AMP + diphosphate. Catalyzes the attachment of L-aspartate to tRNA(Asp) in a two-step reaction: L-aspartate is first activated by ATP to form Asp-AMP and then transferred to the acceptor end of tRNA(Asp). The protein is Aspartate--tRNA ligase of Shewanella loihica (strain ATCC BAA-1088 / PV-4).